A 547-amino-acid polypeptide reads, in one-letter code: Chaperonin GroEL (547 aa).

ATP contacts are provided by residues 30 to 33 (TLGP), Lys51, 87 to 91 (DGTTT), Gly415, and Asp495.

The protein belongs to the chaperonin (HSP60) family. In terms of assembly, forms a cylinder of 14 subunits composed of two heptameric rings stacked back-to-back. Interacts with the co-chaperonin GroES.

Its subcellular location is the cytoplasm. The enzyme catalyses ATP + H2O + a folded polypeptide = ADP + phosphate + an unfolded polypeptide.. Functionally, together with its co-chaperonin GroES, plays an essential role in assisting protein folding. The GroEL-GroES system forms a nano-cage that allows encapsulation of the non-native substrate proteins and provides a physical environment optimized to promote and accelerate protein folding. The sequence is that of Chaperonin GroEL from Rhizobium leguminosarum bv. trifolii (strain WSM2304).